The following is a 122-amino-acid chain: Large ribosomal subunit protein uL14 (122 aa).

Belongs to the universal ribosomal protein uL14 family. As to quaternary structure, part of the 50S ribosomal subunit. Forms a cluster with proteins L3 and L19. In the 70S ribosome, L14 and L19 interact and together make contacts with the 16S rRNA in bridges B5 and B8.

Functionally, binds to 23S rRNA. Forms part of two intersubunit bridges in the 70S ribosome. The protein is Large ribosomal subunit protein uL14 of Carboxydothermus hydrogenoformans (strain ATCC BAA-161 / DSM 6008 / Z-2901).